A 541-amino-acid polypeptide reads, in one-letter code: Glucose-6-phosphate isomerase (541 aa).

Catalysis depends on Glu347, which acts as the Proton donor. Catalysis depends on residues His378 and Lys506.

The protein belongs to the GPI family.

The protein resides in the cytoplasm. The enzyme catalyses alpha-D-glucose 6-phosphate = beta-D-fructose 6-phosphate. It participates in carbohydrate biosynthesis; gluconeogenesis. Its pathway is carbohydrate degradation; glycolysis; D-glyceraldehyde 3-phosphate and glycerone phosphate from D-glucose: step 2/4. Catalyzes the reversible isomerization of glucose-6-phosphate to fructose-6-phosphate. The polypeptide is Glucose-6-phosphate isomerase (Francisella tularensis subsp. holarctica (strain OSU18)).